Here is a 207-residue protein sequence, read N- to C-terminus: dTDP-4-dehydrorhamnose 3-epimerase (207 aa).

Substrate contacts are provided by residues R23, D28, Q47–N49, and R59. H62 serves as the catalytic Proton acceptor. Substrate is bound by residues K72 and H119. The active-site Proton donor is the Y132. 2 residues coordinate substrate: E143 and R167.

The protein belongs to the dTDP-4-dehydrorhamnose 3,5-epimerase family.

It functions in the pathway antibiotic biosynthesis; novobiocin biosynthesis. Its function is as follows. dTDP-6-deoxy-D-xylo-4-hexulose 3-epimerase that acts together with NovU to catalyze the formation of dTDP-4-keto-6-deoxy-5-C-methyl-L-lyxo-hexose from dTDP-4-keto-6-deoxy-D-glucose in the novobiocin biosynthesis pathway, an aminocoumarin family antibiotic that targets bacterial DNA gyrases. The sequence is that of dTDP-4-dehydrorhamnose 3-epimerase from Streptomyces niveus (Streptomyces spheroides).